A 557-amino-acid chain; its full sequence is Glutamine--tRNA ligase (557 aa).

The short motif at 42–52 (PEPNGYLHIGH) is the 'HIGH' region element. ATP is bound by residues 43-45 (EPN) and 49-55 (HIGHAKS). D75 and Y220 together coordinate L-glutamine. Residues T239 and 270–271 (RL) each bind ATP. The 'KMSKS' region signature appears at 277-281 (LTSKR).

This sequence belongs to the class-I aminoacyl-tRNA synthetase family. Monomer.

The protein resides in the cytoplasm. It carries out the reaction tRNA(Gln) + L-glutamine + ATP = L-glutaminyl-tRNA(Gln) + AMP + diphosphate. The sequence is that of Glutamine--tRNA ligase from Haemophilus influenzae (strain ATCC 51907 / DSM 11121 / KW20 / Rd).